A 564-amino-acid chain; its full sequence is Arginine--tRNA ligase (564 aa).

The 'HIGH' region signature appears at 122–132 (PNIAKPFSIGH).

The protein belongs to the class-I aminoacyl-tRNA synthetase family. As to quaternary structure, monomer.

It localises to the cytoplasm. It catalyses the reaction tRNA(Arg) + L-arginine + ATP = L-arginyl-tRNA(Arg) + AMP + diphosphate. This Lactococcus lactis subsp. lactis (strain IL1403) (Streptococcus lactis) protein is Arginine--tRNA ligase.